The following is a 136-amino-acid chain: uncharacterized protein (136 aa).

The tract at residues 74-97 (RADPGRKGRTQPLPTQGSARRFLH) is disordered.

This is an uncharacterized protein from Saccharomyces cerevisiae (strain ATCC 204508 / S288c) (Baker's yeast).